The chain runs to 543 residues: DM7 family protein GG19680 (543 aa).

The segment covering 415–430 (GETQEMDEAHPTKEES) has biased composition (basic and acidic residues). The tract at residues 415–443 (GETQEMDEAHPTKEESKSEEEGEVQSGSQ) is disordered.

It belongs to the DM7 family.

This Drosophila erecta (Fruit fly) protein is DM7 family protein GG19680.